Reading from the N-terminus, the 343-residue chain is Dual-specificity RNA methyltransferase RlmN (343 aa).

Glu92 functions as the Proton acceptor in the catalytic mechanism. The 228-residue stretch at Asp98–Asp325 folds into the Radical SAM core domain. Cys105 and Cys330 are oxidised to a cystine. Cys112, Cys116, and Cys119 together coordinate [4Fe-4S] cluster. Residues Gly157 to Glu158, Ser189, Ser211 to Asn213, and Asn287 contribute to the S-adenosyl-L-methionine site. The S-methylcysteine intermediate role is filled by Cys330.

The protein belongs to the radical SAM superfamily. RlmN family. Requires [4Fe-4S] cluster as cofactor.

Its subcellular location is the cytoplasm. It carries out the reaction adenosine(2503) in 23S rRNA + 2 reduced [2Fe-2S]-[ferredoxin] + 2 S-adenosyl-L-methionine = 2-methyladenosine(2503) in 23S rRNA + 5'-deoxyadenosine + L-methionine + 2 oxidized [2Fe-2S]-[ferredoxin] + S-adenosyl-L-homocysteine. The enzyme catalyses adenosine(37) in tRNA + 2 reduced [2Fe-2S]-[ferredoxin] + 2 S-adenosyl-L-methionine = 2-methyladenosine(37) in tRNA + 5'-deoxyadenosine + L-methionine + 2 oxidized [2Fe-2S]-[ferredoxin] + S-adenosyl-L-homocysteine. In terms of biological role, specifically methylates position 2 of adenine 2503 in 23S rRNA and position 2 of adenine 37 in tRNAs. m2A2503 modification seems to play a crucial role in the proofreading step occurring at the peptidyl transferase center and thus would serve to optimize ribosomal fidelity. The polypeptide is Dual-specificity RNA methyltransferase RlmN (Geotalea uraniireducens (strain Rf4) (Geobacter uraniireducens)).